The primary structure comprises 361 residues: Chorismate synthase (361 aa).

Positions 38-49 (EKDMQHDLDRRR) are enriched in basic and acidic residues. Positions 38 to 58 (EKDMQHDLDRRRPGTSKYTTQ) are disordered. Position 48 (arginine 48) interacts with NADP(+). FMN is bound by residues 125–127 (RSS), 238–239 (NA), glycine 278, 293–297 (KPTSS), and arginine 319.

The protein belongs to the chorismate synthase family. In terms of assembly, homotetramer. The cofactor is FMNH2.

It catalyses the reaction 5-O-(1-carboxyvinyl)-3-phosphoshikimate = chorismate + phosphate. Its pathway is metabolic intermediate biosynthesis; chorismate biosynthesis; chorismate from D-erythrose 4-phosphate and phosphoenolpyruvate: step 7/7. Its function is as follows. Catalyzes the anti-1,4-elimination of the C-3 phosphate and the C-6 proR hydrogen from 5-enolpyruvylshikimate-3-phosphate (EPSP) to yield chorismate, which is the branch point compound that serves as the starting substrate for the three terminal pathways of aromatic amino acid biosynthesis. This reaction introduces a second double bond into the aromatic ring system. In Photobacterium profundum (strain SS9), this protein is Chorismate synthase.